Consider the following 367-residue polypeptide: Cystinosin (367 aa).

Residues 1–22 (MIRNWLTIFILFPLKLVEKCES) form the signal peptide. Residues 23–125 (SVSLTVPPVV…LVIRSSAISI (103 aa)) lie on the Lumenal side of the membrane. Residues asparagine 36, asparagine 41, and asparagine 51 are each glycosylated (N-linked (GlcNAc...) (high mannose) asparagine). N-linked (GlcNAc...) asparagine glycosylation occurs at asparagine 66. N-linked (GlcNAc...) (high mannose) asparagine glycosylation is found at asparagine 84, asparagine 104, and asparagine 107. Residues 123-189 (ISIINQVIGW…LLWVPYIKEQ (67 aa)) enclose the PQ-loop 1 domain. A helical transmembrane segment spans residues 126–150 (INQVIGWIYFVAWSISFYPQVIMNW). At 151–159 (RRKSVIGLS) the chain is on the cytoplasmic side. The helical transmembrane segment at 160 to 179 (FDFVALNLTGFVAYSVFNIG) threads the bilayer. L-cystine is bound at residue asparagine 166. Residues 180-202 (LLWVPYIKEQFLLKYPNGVNPVN) lie on the Lumenal side of the membrane. Residues 203-225 (SNDVFFSLHAVVLTLIIIVQCCL) form a helical membrane-spanning segment. Aspartate 205 is a binding site for H(+). The Cytoplasmic segment spans residues 226-234 (YERGGQRVS). A helical membrane pass occupies residues 235–257 (WPAIGFLVLAWLFAFVTMIVAAV). Over 258–263 (GVTTWL) the chain is Lumenal. Residues 263–328 (LQFLFCFSYI…QSYNNDQWTL (66 aa)) form the PQ-loop 2 domain. Residues 264–289 (QFLFCFSYIKLAVTLVKYFPQAYMNF) traverse the membrane as a helical segment. L-cystine is bound by residues lysine 273, lysine 280, and tyrosine 281. Over 290 to 298 (YYKSTEGWS) the chain is Cytoplasmic. Residues 299-308 (IGNVLLDFTG) form a helical membrane-spanning segment. Asparagine 301 and aspartate 305 together coordinate L-cystine. Aspartate 305 serves as a coordination point for H(+). Topologically, residues 309 to 331 (GSFSLLQMFLQSYNNDQWTLIFG) are lumenal. Residues 332 to 354 (DPTKFGLGVFSIVFDVVFFIQHF) form a helical membrane-spanning segment. Residue aspartate 346 coordinates H(+). Over 355–367 (CLYRKRPGYDQLN) the chain is Cytoplasmic. A Lysosomal targeting motif motif is present at residues 362-366 (GYDQL).

This sequence belongs to the cystinosin family. Interacts with components of the V-ATPase complex. Interacts with components of the Ragulator complex. Interacts with RRAGA/RagA and RRAGC/RagC. Interacts with AP-3 complex subunit mu (AP3M1 or AP3M2). Strongly expressed in pancreas, kidney (adult and fetal), skeletal muscle, melanocytes and keratinocytes. Expressed at lower levels in placenta and heart. Weakly expressed in lung, liver and brain (adult and fetal). As to expression, represents 5-20 % of CTNS transcripts, with the exception of the testis that expresses both isoforms in equal proportions.

It localises to the lysosome membrane. The protein resides in the melanosome membrane. The protein localises to the cell membrane. It carries out the reaction L-cystine(out) + H(+)(out) = L-cystine(in) + H(+)(in). Switches between a lumen- and a cytosol-open conformation: pH induces conformational changes and shifts the equilibrium to facilitate the transition between the lumen- and cytosol-open conformation, thereby promoting cystine transport. Protonation of specific aspartate residues (Asp-205, Asp-305 and Asp-346) favors the cytosol-open conformation. Cystine/H(+) symporter that mediates export of cystine, the oxidized dimer of cysteine, from lysosomes. Plays an important role in melanin synthesis by catalyzing cystine export from melanosomes, possibly by inhibiting pheomelanin synthesis. In addition to cystine export, also acts as a positive regulator of mTORC1 signaling in kidney proximal tubular cells, via interactions with components of the v-ATPase and Ragulator complexes. Also involved in small GTPase-regulated vesicle trafficking and lysosomal localization of LAMP2A, independently of cystine transporter activity. This chain is Cystinosin, found in Homo sapiens (Human).